The chain runs to 152 residues: D-aminoacyl-tRNA deacylase (152 aa).

Residues 137-138 carry the Gly-cisPro motif, important for rejection of L-amino acids motif; it reads GP.

It belongs to the DTD family. In terms of assembly, homodimer.

It is found in the cytoplasm. It carries out the reaction glycyl-tRNA(Ala) + H2O = tRNA(Ala) + glycine + H(+). It catalyses the reaction a D-aminoacyl-tRNA + H2O = a tRNA + a D-alpha-amino acid + H(+). Its function is as follows. An aminoacyl-tRNA editing enzyme that deacylates mischarged D-aminoacyl-tRNAs. Also deacylates mischarged glycyl-tRNA(Ala), protecting cells against glycine mischarging by AlaRS. Acts via tRNA-based rather than protein-based catalysis; rejects L-amino acids rather than detecting D-amino acids in the active site. By recycling D-aminoacyl-tRNA to D-amino acids and free tRNA molecules, this enzyme counteracts the toxicity associated with the formation of D-aminoacyl-tRNA entities in vivo and helps enforce protein L-homochirality. The polypeptide is D-aminoacyl-tRNA deacylase (Geobacillus sp. (strain WCH70)).